A 215-amino-acid chain; its full sequence is MDSWNCTYCGLEDCDHLNSVVVPKQTNTYWPEPESHKLLQENDLFVISGIDCSFRIDKNVVPKNSILFSKMTSQCFTGTNRFDLPLSQGAMKFIYWFFFDEISKNEIVYKSEFCWIDPISENNQNKVHYINEKDLEYICFAETIKHIYSDMLISDDSDLLTVPKVHGFLCPTRAFVRVLSEYLCFPHRLEKFAMISLEQDRNETRKIHQRIMRTY.

This is an uncharacterized protein from Acanthamoeba polyphaga mimivirus (APMV).